A 185-amino-acid chain; its full sequence is Probable nicotinate-nucleotide adenylyltransferase (185 aa).

The protein belongs to the NadD family.

The catalysed reaction is nicotinate beta-D-ribonucleotide + ATP + H(+) = deamido-NAD(+) + diphosphate. It participates in cofactor biosynthesis; NAD(+) biosynthesis; deamido-NAD(+) from nicotinate D-ribonucleotide: step 1/1. In terms of biological role, catalyzes the reversible adenylation of nicotinate mononucleotide (NaMN) to nicotinic acid adenine dinucleotide (NaAD). This chain is Probable nicotinate-nucleotide adenylyltransferase, found in Methylorubrum extorquens (strain PA1) (Methylobacterium extorquens).